A 473-amino-acid chain; its full sequence is MSRGHKKITVLGAGVAGLVAAHELEELGHEVEVLEGSDRLGGRVHTHRFGEGGSVPFVELGAMRIPTKHRHTIDYIGKLGLTPKLKEFKTLFSDDGAYHTTSAGFVRVRDAAKVLVDEFRLLMSGRDLREETILFGAWLTAVGDAIAPADFRAALRTDFTADLLEVVDRIDLDPFLVGAARDQFDLHAFFAAHPEVRTSCTGKLNRFVDDILDETSPRLLRLEGGMDQLVDALVERIRGDIRTGHEVSAIDVREDHVAVTVHNGHGVNTLRSDHVLCTIPFSVLRNLRLTGLSTDKLEIIHDVKYWSATKVAFRCREPFWERDGINGGASFGGGRIRQTYYPPVEGDPTRGAVLLASYTMGDDADVLGGMPEAQRHEVVLDEVGRMHPELHEPGMVVEAVSRAWGEDRWSNGAGVTRWGKDVAACEEERDRAARPEGRLYFAGEHCSSTTAWIDGAVESALAAVRAIEAGDGR.

A signal peptide spans 1 to 21; that stretch reads MSRGHKKITVLGAGVAGLVAA. FAD-binding positions include 15 to 16, 35 to 36, Arg43, 61 to 64, Glu444, and 451 to 456; these read VA, EG, GAMR, and AWIDGA.

Belongs to the flavin monoamine oxidase family. RebO subfamily. In terms of assembly, homodimer. It depends on FAD as a cofactor.

It carries out the reaction 7-chloro-L-tryptophan + O2 = 3-(7-chloroindol-3-yl)-2-iminopropanoate + H2O2. It catalyses the reaction L-tryptophan + O2 = 2-iminio-3-(indol-3-yl)propanoate + H2O2. Its function is as follows. Involved in the biosynthesis of the indolocarbazole antitumor agent rebeccamycin. It generates the imine form of 7-chloroindole 3-pyruvate (7Cl-IPA) from 7-chloro-L-tryptophan (7Cl-Trp), with concomitant two-electron reduction of O(2) to H(2)O(2). The enzyme is also active with L-tryptophan as substrate. The chain is Flavin-dependent L-tryptophan oxidase RebO (rebO) from Lentzea aerocolonigenes (Lechevalieria aerocolonigenes).